The following is a 270-amino-acid chain: Formamidopyrimidine-DNA glycosylase (270 aa).

Pro2 acts as the Schiff-base intermediate with DNA in catalysis. The active-site Proton donor is Glu3. Catalysis depends on Lys58, which acts as the Proton donor; for beta-elimination activity. The DNA site is built by His91, Arg110, and Lys151. The FPG-type zinc finger occupies 236 to 270; the sequence is FVYGRGGQPCKVCGTTLREIKLGQRASVYCPKCQR. Arg260 acts as the Proton donor; for delta-elimination activity in catalysis.

Belongs to the FPG family. As to quaternary structure, monomer. It depends on Zn(2+) as a cofactor.

The catalysed reaction is Hydrolysis of DNA containing ring-opened 7-methylguanine residues, releasing 2,6-diamino-4-hydroxy-5-(N-methyl)formamidopyrimidine.. It catalyses the reaction 2'-deoxyribonucleotide-(2'-deoxyribose 5'-phosphate)-2'-deoxyribonucleotide-DNA = a 3'-end 2'-deoxyribonucleotide-(2,3-dehydro-2,3-deoxyribose 5'-phosphate)-DNA + a 5'-end 5'-phospho-2'-deoxyribonucleoside-DNA + H(+). Its function is as follows. Involved in base excision repair of DNA damaged by oxidation or by mutagenic agents. Acts as a DNA glycosylase that recognizes and removes damaged bases. Has a preference for oxidized purines, such as 7,8-dihydro-8-oxoguanine (8-oxoG). Has AP (apurinic/apyrimidinic) lyase activity and introduces nicks in the DNA strand. Cleaves the DNA backbone by beta-delta elimination to generate a single-strand break at the site of the removed base with both 3'- and 5'-phosphates. This chain is Formamidopyrimidine-DNA glycosylase, found in Pseudomonas savastanoi pv. phaseolicola (strain 1448A / Race 6) (Pseudomonas syringae pv. phaseolicola (strain 1448A / Race 6)).